Reading from the N-terminus, the 125-residue chain is Aspercryptin biosynthesis cluster protein K (125 aa).

The tract at residues 104–125 is disordered; it reads QRAESVAGDSRPREHRQGAVGY. The segment covering 113 to 125 has biased composition (basic and acidic residues); the sequence is SRPREHRQGAVGY.

It functions in the pathway secondary metabolite biosynthesis. Its function is as follows. Part of the gene cluster that mediates the biosynthesis of aspercryptins, linear lipopeptides built from six amino acids including 2 highly unusual and nonproteogenic amino acids, 2-amino-octanoic acid (2aoa) and 2-amino-dodecanol (2adol). The core structure of aspercryptins is as follows: Ser/Ala-Thr-Ile/Val-2aoa-Asn-2adol. The first step of aspercryptin biosynthesis is the generation of the fatty acid precursors, octanoic and dodecanoic acids, by the FAS subunits atnF and atnM. The fatty acid precursors are likely transformed into the corresponding alpha-amino fatty acids in three steps. First, they are hydroxylated by the cytochrome P450 monooxygenase atnE, then oxidized to the corresponding alpha-keto acids by the NAD(P)-dependent oxidoreductase atnD, and finally converted to the alpha-amino fatty acids by the PLP-dependent aminotransferases atnH or atnJ. the alpha-amino fatty acids, 2-amino-octanoic and 2-amino-dodecanoic acids, are recognized, activated, and covalently tethered to the NRPS atnA by its fourth and sixth adenylation domains. The second module of atnA is the Thr module and contains an epimerase (E) domain responsible for the epimerization of Thr to D-allo-Thr. Additionally, despite atnA having only one epimerase domain, the first amino acid of aspercryptin A1 is D-Ser, suggesting that serine is either loaded directly as D-Ser on the first module or that the epimerase domain in the threonine module epimerizes both L-Ser and L-Thr. After condensation of the hexapeptide of aspercryptin, the C-terminal reductase (TE) domain might be involved in the reductive release and production of the aldehyde hexapeptide. Further reduction would generate aspercryptins. The variety of aspercryptins produced reflects the flexibility of the atnA NRPS, allowing incorporation of alanine instead of serine, valine for isoleucine, and a C10 fatty amino alcohol instead of the C12 version. AtnB seems to be involved in the selectivity for Ile versus Val by the third module. Moreover, type B, C and D aspercryptins have an additional N-terminal cichorine, acetyl and propionyl group respectively. The chain is Aspercryptin biosynthesis cluster protein K from Emericella nidulans (strain FGSC A4 / ATCC 38163 / CBS 112.46 / NRRL 194 / M139) (Aspergillus nidulans).